Here is a 177-residue protein sequence, read N- to C-terminus: MKMFFRLTRELRDELKRPLGELVRGPIPEPYLKVRGELEKHPVVTVGDVVTENVLKIGVKPIIALYDLKTKRKEYSPEIEDTAVFLTVTNPPGTITKALLDTVRKAFGLAERGRNVHILVSGEEDLAAIPAVLYAPLGTLVLYGQPDEGVVLIKVTPECKRRCAKILASMEVVRDGD.

Residues Gly25, Tyr31, Asp48, Val49, Val50, Asp67, Lys69, Glu124, and Asp147 each coordinate GTP.

It belongs to the GTP-dependent DPCK family. In terms of assembly, monomer in solution.

The catalysed reaction is 3'-dephospho-CoA + GTP = GDP + CoA + H(+). The protein operates within cofactor biosynthesis; coenzyme A biosynthesis. Catalyzes the GTP-dependent phosphorylation of the 3'-hydroxyl group of dephosphocoenzyme A to form coenzyme A (CoA). Can also use UTP, with lower efficiency and has weak activity with ATP, but shows a strong preference for GTP as the phosphate donor. This is GTP-dependent dephospho-CoA kinase from Thermococcus kodakarensis (strain ATCC BAA-918 / JCM 12380 / KOD1) (Pyrococcus kodakaraensis (strain KOD1)).